The sequence spans 130 residues: MSEKFEVKDLNMKPGMSLKIKGKIHNDVDRFLINLGQGKETLNLHFNPRFDESTIVCNTSEGGRWGQEQRENHMCFSPGSEVKITITFQDKDFKVTLPDGHQLTFPNRLGHNQLHYLSMGGLQISSFKLE.

The Galectin domain occupies 4–130; the sequence is KFEVKDLNMK…GLQISSFKLE (127 aa). 65-71 contacts a beta-D-galactoside; sequence WGQEQRE.

In terms of assembly, homodimer.

This protein binds beta-galactoside. Its physiological function is not yet known. The protein is Galectin-2 (Lgals2) of Mus musculus (Mouse).